Here is a 131-residue protein sequence, read N- to C-terminus: Aspartate 1-decarboxylase (131 aa).

The active-site Schiff-base intermediate with substrate; via pyruvic acid is serine 25. Pyruvic acid (Ser) is present on serine 25. Threonine 57 contacts substrate. Tyrosine 58 acts as the Proton donor in catalysis. 73 to 75 (GAA) lines the substrate pocket.

Belongs to the PanD family. As to quaternary structure, heterooctamer of four alpha and four beta subunits. Pyruvate is required as a cofactor. Post-translationally, is synthesized initially as an inactive proenzyme, which is activated by self-cleavage at a specific serine bond to produce a beta-subunit with a hydroxyl group at its C-terminus and an alpha-subunit with a pyruvoyl group at its N-terminus.

It localises to the cytoplasm. The catalysed reaction is L-aspartate + H(+) = beta-alanine + CO2. Its pathway is cofactor biosynthesis; (R)-pantothenate biosynthesis; beta-alanine from L-aspartate: step 1/1. In terms of biological role, catalyzes the pyruvoyl-dependent decarboxylation of aspartate to produce beta-alanine. This is Aspartate 1-decarboxylase from Anaeromyxobacter sp. (strain K).